The chain runs to 416 residues: Putative gustatory receptor 57a (416 aa).

The Cytoplasmic portion of the chain corresponds to 1 to 13 (MAVLYFFREPETV). A helical membrane pass occupies residues 14 to 34 (FDCAAFICILQFLMGCNGFGI). Over 35–48 (RRSTFRISWASRIY) the chain is Extracellular. Residues 49-69 (SMSVAIAAFCCLFGSLSVLLA) form a helical membrane-spanning segment. The Cytoplasmic portion of the chain corresponds to 70–83 (EEDIRERLAKADNL). The chain crosses the membrane as a helical span at residues 84–104 (VLSISALELLMSTLVFGVTVI). Residues 105–143 (SLQVFARRHLGIYQRLAALDARLMSDFGANLNYRKMLRK) lie on the Extracellular side of the membrane. Residues 144–164 (NIAVLGIVTTIYLMAINSAAV) traverse the membrane as a helical segment. At 165 to 171 (QVASGHR) the chain is on the cytoplasmic side. A helical membrane pass occupies residues 172–192 (ALFLLFALCYTIVTGGPHFTG). Over 193-295 (YVHMTLAEML…NEEENGSCYR (103 aa)) the chain is Extracellular. Residue asparagine 290 is glycosylated (N-linked (GlcNAc...) asparagine). A helical transmembrane segment spans residues 296-316 (MLGYLALVMIPPLYKLLIAPF). Residues 317–374 (YCDRTIYEARRCLRLVEKLDDWFPQKSSLRPLVESLMSWRIQAKIQFTSGLDVVLSRK) lie on the Cytoplasmic side of the membrane. The chain crosses the membrane as a helical span at residues 375-395 (VIGLFTSILVNYLLILIQFAM). Over 396 to 416 (TQKMGEQIEQQKIALQEWIGF) the chain is Extracellular.

The protein belongs to the insect chemoreceptor superfamily. Gustatory receptor (GR) family. Gr57a subfamily. As to expression, in larvae, is expressed in neurons of the terminal external chemosensory organ as well as in the dorsal pharyngeal sense organ.

It is found in the cell membrane. Probable gustatory receptor which mediates acceptance or avoidance behavior, depending on its substrates. This is Putative gustatory receptor 57a (Gr57a) from Drosophila melanogaster (Fruit fly).